A 215-amino-acid polypeptide reads, in one-letter code: LexA repressor (215 aa).

The segment at residues 28–48 (RAEIAAELGFSSPNAAEEHLR) is a DNA-binding region (H-T-H motif). Active-site for autocatalytic cleavage activity residues include S133 and K170.

This sequence belongs to the peptidase S24 family. Homodimer.

It carries out the reaction Hydrolysis of Ala-|-Gly bond in repressor LexA.. In terms of biological role, represses a number of genes involved in the response to DNA damage (SOS response), including recA and lexA. In the presence of single-stranded DNA, RecA interacts with LexA causing an autocatalytic cleavage which disrupts the DNA-binding part of LexA, leading to derepression of the SOS regulon and eventually DNA repair. The polypeptide is LexA repressor (Burkholderia ambifaria (strain ATCC BAA-244 / DSM 16087 / CCUG 44356 / LMG 19182 / AMMD) (Burkholderia cepacia (strain AMMD))).